We begin with the raw amino-acid sequence, 631 residues long: Probable basic-leucine zipper transcription factor F (631 aa).

Residues Lys-35–Ile-62 adopt a coiled-coil conformation. Disordered stretches follow at residues Gln-46–Ile-117, Leu-154–Phe-207, and Met-264–Gln-406. 2 stretches are compositionally biased toward low complexity: residues Asn-155–Gln-206 and Asn-271–Asn-360. Residues Asn-328–Glu-366 adopt a coiled-coil conformation. The region spanning His-405–Leu-468 is the bZIP domain. Residues Lys-407–Lys-427 are basic motif. Residues Leu-433–Leu-440 are leucine-zipper. Residues Gln-546–Arg-631 are disordered. Low complexity-rich tracts occupy residues Ser-563–Ser-609 and Pro-618–Arg-631.

It belongs to the bZIP family.

It is found in the nucleus. Functionally, probable transcriptional regulator. In Dictyostelium discoideum (Social amoeba), this protein is Probable basic-leucine zipper transcription factor F (bzpF).